Consider the following 224-residue polypeptide: ATP synthase subunit a (224 aa).

The next 6 membrane-spanning stretches (helical) occupy residues 17 to 37, 72 to 92, 99 to 119, 125 to 145, 170 to 190, and 195 to 215; these read LSLN…IYWL, IFIS…FPYI, LTLT…YGWI, MFAH…MVCI, LLLT…VTFL, and IALL…FAVL.

The protein belongs to the ATPase A chain family. In terms of assembly, F-type ATPases have 2 components, CF(1) - the catalytic core - and CF(0) - the membrane proton channel. CF(1) has five subunits: alpha(3), beta(3), gamma(1), delta(1), epsilon(1). CF(0) has three main subunits: a, b and c.

It localises to the mitochondrion inner membrane. Mitochondrial membrane ATP synthase (F(1)F(0) ATP synthase or Complex V) produces ATP from ADP in the presence of a proton gradient across the membrane which is generated by electron transport complexes of the respiratory chain. F-type ATPases consist of two structural domains, F(1) - containing the extramembraneous catalytic core and F(0) - containing the membrane proton channel, linked together by a central stalk and a peripheral stalk. During catalysis, ATP synthesis in the catalytic domain of F(1) is coupled via a rotary mechanism of the central stalk subunits to proton translocation. Key component of the proton channel; it may play a direct role in the translocation of protons across the membrane. This chain is ATP synthase subunit a (mt:ATPase6), found in Drosophila mauritiana (Fruit fly).